The sequence spans 264 residues: 3-methyl-2-oxobutanoate hydroxymethyltransferase (264 aa).

Residues D45 and D84 each coordinate Mg(2+). Residues 45 to 46 (DS), D84, and K112 each bind 3-methyl-2-oxobutanoate. E114 is a Mg(2+) binding site. The active-site Proton acceptor is the E181.

The protein belongs to the PanB family. In terms of assembly, homodecamer; pentamer of dimers. The cofactor is Mg(2+).

It localises to the cytoplasm. It carries out the reaction 3-methyl-2-oxobutanoate + (6R)-5,10-methylene-5,6,7,8-tetrahydrofolate + H2O = 2-dehydropantoate + (6S)-5,6,7,8-tetrahydrofolate. The protein operates within cofactor biosynthesis; (R)-pantothenate biosynthesis; (R)-pantoate from 3-methyl-2-oxobutanoate: step 1/2. In terms of biological role, catalyzes the reversible reaction in which hydroxymethyl group from 5,10-methylenetetrahydrofolate is transferred onto alpha-ketoisovalerate to form ketopantoate. In Escherichia fergusonii (strain ATCC 35469 / DSM 13698 / CCUG 18766 / IAM 14443 / JCM 21226 / LMG 7866 / NBRC 102419 / NCTC 12128 / CDC 0568-73), this protein is 3-methyl-2-oxobutanoate hydroxymethyltransferase.